The chain runs to 138 residues: Basic phospholipase A2 PL-Y (138 aa).

Positions 1–16 (MRTLWIMAVLLVGVEG) are cleaved as a signal peptide. 7 disulfides stabilise this stretch: Cys42–Cys131, Cys44–Cys60, Cys59–Cys111, Cys65–Cys138, Cys66–Cys104, Cys73–Cys97, and Cys91–Cys102. Residues Tyr43, Gly45, and Gly47 each coordinate Ca(2+). His63 is an active-site residue. Residue Asp64 participates in Ca(2+) binding. Asp105 is a catalytic residue.

It belongs to the phospholipase A2 family. Group II subfamily. D49 sub-subfamily. Ca(2+) is required as a cofactor. In terms of tissue distribution, expressed by the venom gland.

It is found in the secreted. The catalysed reaction is a 1,2-diacyl-sn-glycero-3-phosphocholine + H2O = a 1-acyl-sn-glycero-3-phosphocholine + a fatty acid + H(+). Its function is as follows. Snake venom phospholipase A2 (PLA2) that can cleave arachidonate at the sn-2 position from phospholipides in the micellar state or in bilayer membranes. PLA2 catalyzes the calcium-dependent hydrolysis of the 2-acyl groups in 3-sn-phosphoglycerides. The chain is Basic phospholipase A2 PL-Y from Protobothrops flavoviridis (Habu).